We begin with the raw amino-acid sequence, 340 residues long: MKLRHLLLTGAALTSFAATTVHGETVVNGAKLTVTKNLDLVNSNALIPNTDFTFKIEPDTTVNEDGNKFKGVALNTPMTKVTYTNSDKGGSNTKTAEFDFSEVTFEKPGVYYYKVTEEKIDKVPGVSYDTTSYTVQVHVLWNEEQQKPVATYIVGYKEGSKVPIQFKNSLDSTTLTVKKKVSGTGGDRSKDFNFGLTLKANQYYKASEKVMIEKTTKGGQAPVQTEASIDQLYHFTLKDGESIKVTNLPVGVDYVVTEDDYKSEKYTTNVEVSPQDGAVKNIAGNSTEQETSTDKDMTITFTNKKDFEVPTGVAMTVAPYIALGIVAVGGALYFVKKKNA.

The N-terminal stretch at 1–23 (MKLRHLLLTGAALTSFAATTVHG) is a signal peptide. Cross-links (isoaspartyl lysine isopeptide (Lys-Asn)) lie at residues 36–168 (KNLD…QFKN) and 179–303 (KKVS…TFTN). K161 is covalently cross-linked (Threonyl lysine isopeptide (Lys-Thr) (interchain with T-311)). An EVPTG sorting signal motif is present at residues 308–312 (EVPTG). T311 bears the Pentaglycyl murein peptidoglycan amidated threonine; alternate mark. T311 participates in a covalent cross-link: Threonyl lysine isopeptide (Thr-Lys) (interchain with K-161); alternate. Residues 312–340 (GVAMTVAPYIALGIVAVGGALYFVKKKNA) constitute a propeptide, removed by sortase C1.

It belongs to the Streptococcus pilin family. Forms columns of about 3-nanometers in diameter of head-to-tail-assembled molecules. In terms of processing, proteolytically processed and assembled in pili through a transpeptidation reaction catalyzed by the sortase C1. The last pilin subunit is cross-linked to the peptidoglycan.

Its subcellular location is the secreted. The protein localises to the cell wall. The protein resides in the fimbrium. Its function is as follows. Major component of the pilus. A stack of the pilin subunits, joined by intermolecular isopeptide bonds, forms the pilus. The pilus is required for bacterial adhesion to host cells, for bacterial aggregation, and for biofilm formation. The chain is Pilin from Streptococcus pyogenes serotype M1.